Reading from the N-terminus, the 598-residue chain is Phenylalanine--tRNA ligase beta subunit, cytoplasmic (598 aa).

The 81-residue stretch at 303–383 (LAVYDMEVPL…IAYGFNNIPT (81 aa)) folds into the B5 domain. Mg(2+) is bound by residues D361, D367, E370, and D371.

This sequence belongs to the phenylalanyl-tRNA synthetase beta subunit family. Type 2 subfamily. As to quaternary structure, tetramer of two alpha and two beta subunits. Mg(2+) serves as cofactor.

It is found in the cytoplasm. Its subcellular location is the cytosol. It catalyses the reaction tRNA(Phe) + L-phenylalanine + ATP = L-phenylalanyl-tRNA(Phe) + AMP + diphosphate + H(+). The protein is Phenylalanine--tRNA ligase beta subunit, cytoplasmic of Arabidopsis thaliana (Mouse-ear cress).